The primary structure comprises 417 residues: Serine hydroxymethyltransferase (417 aa).

(6S)-5,6,7,8-tetrahydrofolate is bound by residues L112 and 116–118 (GHL). The residue at position 221 (K221) is an N6-(pyridoxal phosphate)lysine. E247 contributes to the (6S)-5,6,7,8-tetrahydrofolate binding site.

It belongs to the SHMT family. In terms of assembly, homodimer. Pyridoxal 5'-phosphate serves as cofactor.

It localises to the cytoplasm. It carries out the reaction (6R)-5,10-methylene-5,6,7,8-tetrahydrofolate + glycine + H2O = (6S)-5,6,7,8-tetrahydrofolate + L-serine. Its pathway is one-carbon metabolism; tetrahydrofolate interconversion. It participates in amino-acid biosynthesis; glycine biosynthesis; glycine from L-serine: step 1/1. In terms of biological role, catalyzes the reversible interconversion of serine and glycine with tetrahydrofolate (THF) serving as the one-carbon carrier. This reaction serves as the major source of one-carbon groups required for the biosynthesis of purines, thymidylate, methionine, and other important biomolecules. Also exhibits THF-independent aldolase activity toward beta-hydroxyamino acids, producing glycine and aldehydes, via a retro-aldol mechanism. The chain is Serine hydroxymethyltransferase from Borrelia turicatae (strain 91E135).